Consider the following 389-residue polypeptide: GDSL esterase/lipase At5g14450 (389 aa).

Residues 1–30 (MKDNLERAKLMVSSTVFSWLLLCLFAVTTS) form the signal peptide. The Nucleophile role is filled by Ser48. 2 N-linked (GlcNAc...) asparagine glycosylation sites follow: Asn125 and Asn335. Catalysis depends on residues Asp354 and His357.

It belongs to the 'GDSL' lipolytic enzyme family.

The protein resides in the secreted. This is GDSL esterase/lipase At5g14450 from Arabidopsis thaliana (Mouse-ear cress).